The primary structure comprises 257 residues: Acetylglutamate kinase (257 aa).

Residues 43–44 (GG), arginine 65, and asparagine 157 contribute to the substrate site. ATP contacts are provided by residues 180 to 185 (DISSIL) and 208 to 210 (IIT).

It belongs to the acetylglutamate kinase family. ArgB subfamily. Homodimer.

The protein localises to the cytoplasm. The enzyme catalyses N-acetyl-L-glutamate + ATP = N-acetyl-L-glutamyl 5-phosphate + ADP. It functions in the pathway amino-acid biosynthesis; L-arginine biosynthesis; N(2)-acetyl-L-ornithine from L-glutamate: step 2/4. Catalyzes the ATP-dependent phosphorylation of N-acetyl-L-glutamate. The sequence is that of Acetylglutamate kinase from Buchnera aphidicola subsp. Acyrthosiphon pisum (strain Tuc7).